We begin with the raw amino-acid sequence, 147 residues long: Cilia- and flagella-associated protein 90 (147 aa).

The disordered stretch occupies residues 1-36 (MEDDEEETTASTLRGKPRPPPVSAQSAFSYIPPRRL).

In terms of assembly, microtubule inner protein component of sperm flagellar doublet microtubules.

It is found in the cytoplasm. The protein resides in the cytoskeleton. Its subcellular location is the cilium axoneme. It localises to the flagellum axoneme. In terms of biological role, microtubule inner protein (MIP) part of the dynein-decorated doublet microtubules (DMTs) in cilia axoneme, which is required for motile cilia beating. This chain is Cilia- and flagella-associated protein 90, found in Homo sapiens (Human).